The primary structure comprises 649 residues: Golgin subfamily A member 6-like protein 26 (649 aa).

Disordered stretches follow at residues 1–94 (MWPQ…HQEA), 300–330 (QEEK…RQEE), 358–440 (EKMH…EMWR), 455–572 (KEKM…REQE), and 584–620 (EQEE…MRRQ). Over residues 10-23 (HPHLPTHPHLPTHP) the composition is skewed to low complexity. Over residues 25–46 (MSKETRQSKLAEAKEQLTDHHP) the composition is skewed to basic and acidic residues. 2 stretches are compositionally biased toward polar residues: residues 47 to 57 (QTNPSVGTAAS) and 65 to 77 (NNGT…TSGG). Over residues 80–94 (SPEDEQKASHQHQEA) the composition is skewed to basic and acidic residues. Residues 151–644 (LEQALSAVAT…EEKMQEHQEH (494 aa)) are a coiled coil.

The protein belongs to the GOLGA6 family.

The protein is Golgin subfamily A member 6-like protein 26 (GOLGA6L26) of Homo sapiens (Human).